A 394-amino-acid chain; its full sequence is Cytohesin-4 (394 aa).

Residues 12–65 (SSGETEELQRIKWHRKQLLEDIQKLKDEIADVFAQIDCFESAEESRMAQKEKEL) adopt a coiled-coil conformation. The 188-residue stretch at 54–241 (EESRMAQKEK…RNLFDSIKSE (188 aa)) folds into the SEC7 domain. The PH domain occupies 259-375 (NPDREGWLLK…WIESIRASIT (117 aa)). A 1,2-diacyl-sn-glycero-3-phospho-(1D-myo-inositol-3,4,5-trisphosphate)-binding positions include 268 to 275 (KLGGRVKT), R279, Y290, and R300. The C-terminal autoinhibitory region stretch occupies residues 386–394 (RKKKIASKQ).

Expressed predominantly in peripheral blood leukocytes.

The protein resides in the cell membrane. In terms of biological role, promotes guanine-nucleotide exchange on ARF1 and ARF5. Promotes the activation of ARF factors through replacement of GDP with GTP. The sequence is that of Cytohesin-4 (CYTH4) from Homo sapiens (Human).